The sequence spans 127 residues: Turripeptide OL172 (127 aa).

A signal peptide spans 1 to 20; the sequence is MFSTLIFLTAVTLLMMPSQT. Positions 42–43 are excised as a propeptide; that stretch reads QR. Pyrrolidone carboxylic acid is present on Gln44. Positions 73–75 are excised as a propeptide; it reads QRK. Pyrrolidone carboxylic acid is present on Gln76. The propeptide occupies 104–106; the sequence is QRK. Residue Gln107 is modified to Pyrrolidone carboxylic acid.

The turripeptide OL172 conotoxin-like contains 2 disulfide bonds. In terms of tissue distribution, expressed by the venom duct.

It is found in the secreted. Its function is as follows. Acts as a neurotoxin by inhibiting an ion channel. The protein is Turripeptide OL172 of Iotyrris olangoensis (Sea snail).